Here is a 198-residue protein sequence, read N- to C-terminus: MHYPEPISKLIDSFMKLPGIGPKTAQRLAFHVLDMKEDDVVQFAKALVDVKRELTYCSVCGHITEEDPCYICNDKQRDRSVICVVEDDKDVIAMEKMREYKGLYHVLHGAISPMDGIGPEDINIPSLIERLKDEEVKELILAMNPNLEGESTAMYISRLVKPIGIKVTRLAQGLSVGGDLEYADEVTLSRAIEGRTEM.

Residues 57–72 (CSVCGHITEEDPCYIC) form a C4-type zinc finger. One can recognise a Toprim domain in the interval 80-175 (SVICVVEDDK…KVTRLAQGLS (96 aa)).

This sequence belongs to the RecR family.

Functionally, may play a role in DNA repair. It seems to be involved in an RecBC-independent recombinational process of DNA repair. It may act with RecF and RecO. The chain is Recombination protein RecR from Staphylococcus carnosus (strain TM300).